The chain runs to 306 residues: Beta-lactamase 1 (306 aa).

The signal sequence occupies residues 1 to 43; sequence MKNKRMLKIGMCVGILGLSVTSLEAFTGGALQVEAKEKTGQVK. Residue serine 89 is the Acyl-ester intermediate of the active site. The active-site Proton acceptor is the glutamate 185. 251-253 contacts substrate; the sequence is KSG.

It belongs to the class-A beta-lactamase family.

The enzyme catalyses a beta-lactam + H2O = a substituted beta-amino acid. In terms of biological role, this protein is a beta-lactamase with a substrate specificity for penicillins. The polypeptide is Beta-lactamase 1 (blaCI) (Bacillus mycoides).